The primary structure comprises 246 residues: MATAGEESQTQAGRHQEVGHKSLLQSDALYQHILETSVYPREPEPMKELREITAKHPWNIMTTSADEGQFLNMLLKLINAKNTMEIGVFTGYSLLATALALPDDGKILAMDINRENYELGLPVIQKAGVADKIDFREGPALPILDQLIEDGKQGSFDFIFVDADKDNYLNYHKRLIELVKVGGLIGYDNTLWNGSVVAPPDAPLRKYVRYYRDFVLELNKALAADPRIEICMLPVGDGITLCRRIS.

A substrate-binding site is contributed by Lys21. Residues Thr63, Glu85, 87–88 (GV), Ser93, Asp111, and Ala140 each bind S-adenosyl-L-methionine. Asp162 provides a ligand contact to substrate. Asp162 is an a divalent metal cation binding site. Residue Asp164 coordinates S-adenosyl-L-methionine. A divalent metal cation is bound by residues Asp188 and Asn189. Asn193 lines the substrate pocket.

Belongs to the class I-like SAM-binding methyltransferase superfamily. Cation-dependent O-methyltransferase family. CCoAMT subfamily. The cofactor is a divalent metal cation.

The catalysed reaction is (E)-caffeoyl-CoA + S-adenosyl-L-methionine = (E)-feruloyl-CoA + S-adenosyl-L-homocysteine + H(+). The protein operates within aromatic compound metabolism; phenylpropanoid biosynthesis. Functionally, methylates caffeoyl-CoA to feruloyl-CoA and 5-hydroxyferuloyl-CoA to sinapoyl-CoA. Plays a role in the synthesis of feruloylated polysaccharides. Involved in the reinforcement of the plant cell wall. Also involved in the responding to wounding or pathogen challenge by the increased formation of cell wall-bound ferulic acid polymers. In Eucalyptus globulus (Tasmanian blue gum), this protein is Caffeoyl-CoA O-methyltransferase 1 (CCOMT).